A 143-amino-acid polypeptide reads, in one-letter code: Large ribosomal subunit protein uL15 (143 aa).

Residues 1 to 54 are disordered; sequence MELNSIKPAEGAKHAKRRVGRGIGSGLGKTAGRGHKGQKSRSGGYHKVGFEGGQ. Residues 21-31 show a composition bias toward gly residues; that stretch reads RGIGSGLGKTA.

It belongs to the universal ribosomal protein uL15 family. As to quaternary structure, part of the 50S ribosomal subunit.

Its function is as follows. Binds to the 23S rRNA. The polypeptide is Large ribosomal subunit protein uL15 (Paracidovorax citrulli (strain AAC00-1) (Acidovorax citrulli)).